The following is a 162-amino-acid chain: Ribonuclease P protein component (162 aa).

Residues 1–63 (MDEKDLATQP…PPAAGGKLLS (63 aa)) are disordered. Residues 21-38 (GPHEDPRRQEGVEAEKAE) show a composition bias toward basic and acidic residues.

The protein belongs to the RnpA family. In terms of assembly, consists of a catalytic RNA component (M1 or rnpB) and a protein subunit.

The catalysed reaction is Endonucleolytic cleavage of RNA, removing 5'-extranucleotides from tRNA precursor.. In terms of biological role, RNaseP catalyzes the removal of the 5'-leader sequence from pre-tRNA to produce the mature 5'-terminus. It can also cleave other RNA substrates such as 4.5S RNA. The protein component plays an auxiliary but essential role in vivo by binding to the 5'-leader sequence and broadening the substrate specificity of the ribozyme. The chain is Ribonuclease P protein component from Thermus scotoductus.